The sequence spans 289 residues: 3-methyl-2-oxobutanoate hydroxymethyltransferase (289 aa).

Over residues 1–15 (MSTTFQLDTSTSRAN) the composition is skewed to polar residues. The disordered stretch occupies residues 1-20 (MSTTFQLDTSTSRANPTPAP). Residues aspartate 67 and aspartate 106 each contribute to the Mg(2+) site. 3-methyl-2-oxobutanoate contacts are provided by residues 67 to 68 (DS), aspartate 106, and lysine 136. Glutamate 138 serves as a coordination point for Mg(2+). The Proton acceptor role is filled by glutamate 205.

It belongs to the PanB family. As to quaternary structure, homodecamer; pentamer of dimers. It depends on Mg(2+) as a cofactor.

The protein resides in the cytoplasm. The catalysed reaction is 3-methyl-2-oxobutanoate + (6R)-5,10-methylene-5,6,7,8-tetrahydrofolate + H2O = 2-dehydropantoate + (6S)-5,6,7,8-tetrahydrofolate. It participates in cofactor biosynthesis; (R)-pantothenate biosynthesis; (R)-pantoate from 3-methyl-2-oxobutanoate: step 1/2. Functionally, catalyzes the reversible reaction in which hydroxymethyl group from 5,10-methylenetetrahydrofolate is transferred onto alpha-ketoisovalerate to form ketopantoate. The polypeptide is 3-methyl-2-oxobutanoate hydroxymethyltransferase (Novosphingobium aromaticivorans (strain ATCC 700278 / DSM 12444 / CCUG 56034 / CIP 105152 / NBRC 16084 / F199)).